The sequence spans 85 residues: Large ribosomal subunit protein bL27 (85 aa).

The disordered stretch occupies residues 1–21 (MAHKKAGGSTRNGRDSESKRL).

Belongs to the bacterial ribosomal protein bL27 family.

The chain is Large ribosomal subunit protein bL27 from Photorhabdus laumondii subsp. laumondii (strain DSM 15139 / CIP 105565 / TT01) (Photorhabdus luminescens subsp. laumondii).